We begin with the raw amino-acid sequence, 617 residues long: UvrABC system protein C (617 aa).

Positions 22 to 100 constitute a GIY-YIG domain; it reads NLPGVYRFFN…IKALSPKYNI (79 aa). The 36-residue stretch at 209–244 folds into the UVR domain; the sequence is DELTRTLQHKMQTAAANLQFEEAARYRDQIQALGIM.

The protein belongs to the UvrC family. In terms of assembly, interacts with UvrB in an incision complex.

It is found in the cytoplasm. The UvrABC repair system catalyzes the recognition and processing of DNA lesions. UvrC both incises the 5' and 3' sides of the lesion. The N-terminal half is responsible for the 3' incision and the C-terminal half is responsible for the 5' incision. This Neisseria meningitidis serogroup B (strain ATCC BAA-335 / MC58) protein is UvrABC system protein C.